We begin with the raw amino-acid sequence, 195 residues long: ATP-dependent Clp protease proteolytic subunit (195 aa).

Residue Ser98 is the Nucleophile of the active site. His123 is a catalytic residue.

Belongs to the peptidase S14 family. Fourteen ClpP subunits assemble into 2 heptameric rings which stack back to back to give a disk-like structure with a central cavity, resembling the structure of eukaryotic proteasomes.

It localises to the cytoplasm. The catalysed reaction is Hydrolysis of proteins to small peptides in the presence of ATP and magnesium. alpha-casein is the usual test substrate. In the absence of ATP, only oligopeptides shorter than five residues are hydrolyzed (such as succinyl-Leu-Tyr-|-NHMec, and Leu-Tyr-Leu-|-Tyr-Trp, in which cleavage of the -Tyr-|-Leu- and -Tyr-|-Trp bonds also occurs).. Cleaves peptides in various proteins in a process that requires ATP hydrolysis. Has a chymotrypsin-like activity. Plays a major role in the degradation of misfolded proteins. This is ATP-dependent Clp protease proteolytic subunit from Sulfurovum sp. (strain NBC37-1).